A 694-amino-acid chain; its full sequence is DNA-directed RNA polymerase subunit beta' (694 aa).

Residues cysteine 69, cysteine 71, cysteine 87, and cysteine 90 each coordinate Zn(2+). 3 residues coordinate Mg(2+): aspartate 489, aspartate 491, and aspartate 493.

This sequence belongs to the RNA polymerase beta' chain family. RpoC1 subfamily. In plastids the minimal PEP RNA polymerase catalytic core is composed of four subunits: alpha, beta, beta', and beta''. When a (nuclear-encoded) sigma factor is associated with the core the holoenzyme is formed, which can initiate transcription. Mg(2+) serves as cofactor. The cofactor is Zn(2+).

The protein localises to the plastid. It localises to the chloroplast. The enzyme catalyses RNA(n) + a ribonucleoside 5'-triphosphate = RNA(n+1) + diphosphate. Functionally, DNA-dependent RNA polymerase catalyzes the transcription of DNA into RNA using the four ribonucleoside triphosphates as substrates. The sequence is that of DNA-directed RNA polymerase subunit beta' from Adiantum capillus-veneris (Maidenhair fern).